The primary structure comprises 174 residues: Thioredoxin O, mitochondrial (174 aa).

Residues 1–59 (MALAHRLCRLPRLLPLAAAAAASKPYLPGKPSPAPPPPLSSPPPFPSLSRLFSTTPSSS) constitute a mitochondrion transit peptide. The region spanning 60–172 (GDSSMVVVGS…LESTMESLHK (113 aa)) is the Thioredoxin domain. Active-site nucleophile residues include cysteine 96 and cysteine 99. A disulfide bridge connects residues cysteine 96 and cysteine 99.

The protein belongs to the thioredoxin family. Plant O-type subfamily.

The protein resides in the mitochondrion. In terms of biological role, probable thiol-disulfide oxidoreductase that may participate in various redox reactions. In Oryza sativa subsp. japonica (Rice), this protein is Thioredoxin O, mitochondrial.